The primary structure comprises 337 residues: tRNA N6-adenosine threonylcarbamoyltransferase (337 aa).

Fe cation is bound by residues His-111 and His-115. Substrate contacts are provided by residues 134 to 138, Asp-167, Gly-180, and Asn-272; that span reads LVSGG. A Fe cation-binding site is contributed by Asp-300.

The protein belongs to the KAE1 / TsaD family. Fe(2+) is required as a cofactor.

The protein localises to the cytoplasm. It catalyses the reaction L-threonylcarbamoyladenylate + adenosine(37) in tRNA = N(6)-L-threonylcarbamoyladenosine(37) in tRNA + AMP + H(+). Its function is as follows. Required for the formation of a threonylcarbamoyl group on adenosine at position 37 (t(6)A37) in tRNAs that read codons beginning with adenine. Is involved in the transfer of the threonylcarbamoyl moiety of threonylcarbamoyl-AMP (TC-AMP) to the N6 group of A37, together with TsaE and TsaB. TsaD likely plays a direct catalytic role in this reaction. The protein is tRNA N6-adenosine threonylcarbamoyltransferase of Salmonella typhi.